Reading from the N-terminus, the 221-residue chain is Eukaryotic translation initiation factor 4E-2 (221 aa).

A compositionally biased stretch (basic and acidic residues) spans 1–20; that stretch reads MADELNKAALEEYKSSSVED. Residues 1–36 form a disordered region; the sequence is MADELNKAALEEYKSSSVEDRGEEGEIVGESDDTAS. Over residues 21-33 the composition is skewed to acidic residues; it reads RGEEGEIVGESDD. EIF4G-binding stretches follow at residues 46–49 and 56–92; these read HPLE and FDNP…NNIH. Residues 64–69, K96, and 114–115 each bind mRNA; these read KQAAWG and WE. C119 and C157 are disulfide-bonded. An EIF4G-binding region spans residues 140 to 149; it reads YTLLALIGEQ. MRNA contacts are provided by residues 164–169 and 209–213; these read RVRQEK and KKLDR.

This sequence belongs to the eukaryotic initiation factor 4E family. In terms of assembly, EIF4F is a multi-subunit complex, the composition of which varies with external and internal environmental conditions. It is composed of at least EIF4A, EIF4E and EIF4G. EIF4E is also known to interact with other partners. In higher plants two isoforms of EIF4F have been identified, named isoform EIF4F and isoform EIF(iso)4F. Isoform EIF4F has subunits p220 and p26, whereas isoform EIF(iso)4F has subunits p82 and p28. As to quaternary structure, (Microbial infection) Interacts with potyvirus viral genome-linked protein (VPg) in the nucleus; mostly potato virus Y (PVY-LYE84) and tobacco etch virus (TEV-HAT) VPg, but not with PVY-LYE90 and pepper mottle virus (PepMoV) VPg; these interactions are possible in susceptible hosts but impaired in resistant plants. In terms of processing, according to the redox status, the Cys-119-Cys-157 disulfide bridge may have a role in regulating protein function by affecting its ability to bind capped mRNA.

It localises to the nucleus. The protein localises to the cytoplasm. Functionally, component of the protein complex eIF4F, which is involved in the recognition of the mRNA cap, ATP-dependent unwinding of 5'-terminal secondary structure and recruitment of mRNA to the ribosome. Recognizes and binds the 7-methylguanosine-containing mRNA cap during an early step in the initiation of protein synthesis and facilitates ribosome binding by inducing the unwinding of the mRNAs secondary structures. Key component of recessive resistance to potyviruses. In terms of biological role, (Microbial infection) Susceptibility host factor required for viral infection (e.g. potato virus Y (PVY) and tobacco etch virus (TEV)) by recruiting viral RNAs to the host ribosomal complex via an interaction with viral genome-linked protein (VPg). This chain is Eukaryotic translation initiation factor 4E-2, found in Solanum lycopersicum (Tomato).